Consider the following 577-residue polypeptide: Aspartate--tRNA(Asp/Asn) ligase (577 aa).

Glutamate 171 serves as a coordination point for L-aspartate. Residues 195-198 (QLFK) form an aspartate region. Arginine 217 serves as a coordination point for L-aspartate. ATP contacts are provided by residues 217–219 (RDE) and glutamine 226. Histidine 444 contributes to the L-aspartate binding site. ATP is bound at residue glutamate 474. Arginine 481 is a binding site for L-aspartate. 526 to 529 (GFDR) is a binding site for ATP.

This sequence belongs to the class-II aminoacyl-tRNA synthetase family. Type 1 subfamily. In terms of assembly, homodimer.

It is found in the cytoplasm. It carries out the reaction tRNA(Asx) + L-aspartate + ATP = L-aspartyl-tRNA(Asx) + AMP + diphosphate. Functionally, aspartyl-tRNA synthetase with relaxed tRNA specificity since it is able to aspartylate not only its cognate tRNA(Asp) but also tRNA(Asn). Reaction proceeds in two steps: L-aspartate is first activated by ATP to form Asp-AMP and then transferred to the acceptor end of tRNA(Asp/Asn). The chain is Aspartate--tRNA(Asp/Asn) ligase from Helicobacter pylori (strain G27).